Reading from the N-terminus, the 752-residue chain is Lid2 complex component jmj3 (752 aa).

In terms of domain architecture, JmjN spans 34–75 (IPVVEPKISEFVDMESFIRRVERLGKKYGAIKVVRPSSVLNP). The JmjC domain maps to 162 to 333 (YTNRPSIPFY…NYEFSNLRRL (172 aa)). 2 stretches are compositionally biased toward polar residues: residues 391–402 (SFSQRDFDSPNS) and 409–423 (LMSNHESASTEHFNS). The interval 391-438 (SFSQRDFDSPNSINPPSPLMSNHESASTEHFNSTTTTEKELSSLHVGE) is disordered. Positions 427 to 438 (TEKELSSLHVGE) are enriched in basic and acidic residues.

In terms of assembly, component of the Lid2 complex composed of ash2, jmj3, lid2, sdc1 and snt2.

It localises to the nucleus. This Schizosaccharomyces pombe (strain 972 / ATCC 24843) (Fission yeast) protein is Lid2 complex component jmj3.